The primary structure comprises 248 residues: MTNGKLILLRHGQSEWNASNQFTGWVDVNLTEQGEAEAKRGGELLVEAGVLPGVVYTSLLRRAIRTANIALNAADRHWIPVIRDWRLNERHYGALQGLDKAATKEKYGDDQFMEWRRSYDTPPPELADDAEYSQANDPRYADLDVVPRTECLKDVVVRFVPYFEEEILPRAKKGETVLIAAHGNSLRALVKHLDGISDADIAELNIPTGIPLVYEIAEDGSVVNPGGTYLDPEAAAAGAAAVANQGNK.

Substrate is bound by residues Arg-10 to Asn-17, Thr-23 to Gly-24, Arg-62, Glu-89 to Tyr-92, Lys-100, Arg-116 to Arg-117, and Gly-183 to Asn-184. Catalysis depends on His-11, which acts as the Tele-phosphohistidine intermediate. Residue Glu-89 is the Proton donor/acceptor of the active site.

The protein belongs to the phosphoglycerate mutase family. BPG-dependent PGAM subfamily.

The enzyme catalyses (2R)-2-phosphoglycerate = (2R)-3-phosphoglycerate. It functions in the pathway carbohydrate degradation; glycolysis; pyruvate from D-glyceraldehyde 3-phosphate: step 3/5. Its function is as follows. Catalyzes the interconversion of 2-phosphoglycerate and 3-phosphoglycerate. The polypeptide is 2,3-bisphosphoglycerate-dependent phosphoglycerate mutase (Corynebacterium glutamicum (strain ATCC 13032 / DSM 20300 / JCM 1318 / BCRC 11384 / CCUG 27702 / LMG 3730 / NBRC 12168 / NCIMB 10025 / NRRL B-2784 / 534)).